The sequence spans 146 residues: Hemoglobin subunit beta-1/2 (146 aa).

V1 carries the post-translational modification N-acetylvaline. Residues H2 to H146 form the Globin domain. S44 is subject to Phosphoserine. Residue K59 is modified to N6-acetyllysine. Residues H63 and H92 each coordinate heme b. C93 is modified (S-nitrosocysteine). Residue K144 is modified to N6-acetyllysine.

The protein belongs to the globin family. As to quaternary structure, heterotetramer of two alpha chains and two beta chains. Red blood cells.

In terms of biological role, involved in oxygen transport from the lung to the various peripheral tissues. The sequence is that of Hemoglobin subunit beta-1/2 (HBB) from Otolemur crassicaudatus (Brown greater galago).